Consider the following 178-residue polypeptide: Sec-independent protein translocase protein TatB (178 aa).

Residues 2 to 22 (LPEIGAAELLIIAAVALIVVG) form a helical membrane-spanning segment. The interval 104–178 (HSPTGYENTV…KARKTAGSAE (75 aa)) is disordered. Residues 114–131 (EPPPPEPEPQPAAEPAPK) are compositionally biased toward pro residues. Residues 141–154 (PKAAAAPKAAAKPK) are compositionally biased toward low complexity.

The protein belongs to the TatB family. The Tat system comprises two distinct complexes: a TatABC complex, containing multiple copies of TatA, TatB and TatC subunits, and a separate TatA complex, containing only TatA subunits. Substrates initially bind to the TatABC complex, which probably triggers association of the separate TatA complex to form the active translocon.

Its subcellular location is the cell inner membrane. Part of the twin-arginine translocation (Tat) system that transports large folded proteins containing a characteristic twin-arginine motif in their signal peptide across membranes. Together with TatC, TatB is part of a receptor directly interacting with Tat signal peptides. TatB may form an oligomeric binding site that transiently accommodates folded Tat precursor proteins before their translocation. This chain is Sec-independent protein translocase protein TatB, found in Phenylobacterium zucineum (strain HLK1).